The primary structure comprises 158 residues: Ribosomal RNA large subunit methyltransferase H (158 aa).

S-adenosyl-L-methionine contacts are provided by residues L72, G103, and 122–127; that span reads LGNLTL.

The protein belongs to the RNA methyltransferase RlmH family. As to quaternary structure, homodimer.

The protein localises to the cytoplasm. The catalysed reaction is pseudouridine(1915) in 23S rRNA + S-adenosyl-L-methionine = N(3)-methylpseudouridine(1915) in 23S rRNA + S-adenosyl-L-homocysteine + H(+). Its function is as follows. Specifically methylates the pseudouridine at position 1915 (m3Psi1915) in 23S rRNA. This chain is Ribosomal RNA large subunit methyltransferase H, found in Acidiphilium cryptum (strain JF-5).